The chain runs to 67 residues: DNA-directed RNA polymerase subunit omega (67 aa).

This sequence belongs to the RNA polymerase subunit omega family. As to quaternary structure, the RNAP catalytic core consists of 2 alpha, 1 beta, 1 beta' and 1 omega subunit. When a sigma factor is associated with the core the holoenzyme is formed, which can initiate transcription.

The catalysed reaction is RNA(n) + a ribonucleoside 5'-triphosphate = RNA(n+1) + diphosphate. In terms of biological role, promotes RNA polymerase assembly. Latches the N- and C-terminal regions of the beta' subunit thereby facilitating its interaction with the beta and alpha subunits. The chain is DNA-directed RNA polymerase subunit omega from Methylibium petroleiphilum (strain ATCC BAA-1232 / LMG 22953 / PM1).